Reading from the N-terminus, the 177-residue chain is Large ribosomal subunit protein uL6 (177 aa).

This sequence belongs to the universal ribosomal protein uL6 family. As to quaternary structure, part of the 50S ribosomal subunit.

Functionally, this protein binds to the 23S rRNA, and is important in its secondary structure. It is located near the subunit interface in the base of the L7/L12 stalk, and near the tRNA binding site of the peptidyltransferase center. The polypeptide is Large ribosomal subunit protein uL6 (Halorhodospira halophila (strain DSM 244 / SL1) (Ectothiorhodospira halophila (strain DSM 244 / SL1))).